A 391-amino-acid chain; its full sequence is Putative neutrophil cytosol factor 1B (391 aa).

The PX domain occupies Met-1–Leu-126. SH3 domains follow at residues Ile-157–Ser-216 and Tyr-227–Gln-286. Residues Gln-286–Val-391 form a disordered region. Phosphoserine is present on residues Ser-304 and Ser-305. Positions His-310–Arg-319 are enriched in basic residues. 4 positions are modified to phosphoserine: Ser-321, Ser-329, Ser-346, and Ser-349.

The protein localises to the cytoplasm. May be required for activation of the latent NADPH oxidase (necessary for superoxide production). The protein is Putative neutrophil cytosol factor 1B (NCF1B) of Homo sapiens (Human).